The chain runs to 498 residues: ATP synthase subunit beta, chloroplastic (498 aa).

At threonine 6 the chain carries Phosphothreonine. A Phosphoserine modification is found at serine 13. 172–179 (GGAGVGKT) serves as a coordination point for ATP.

The protein belongs to the ATPase alpha/beta chains family. In terms of assembly, F-type ATPases have 2 components, CF(1) - the catalytic core - and CF(0) - the membrane proton channel. CF(1) has five subunits: alpha(3), beta(3), gamma(1), delta(1), epsilon(1). CF(0) has four main subunits: a(1), b(1), b'(1) and c(9-12).

It localises to the plastid. It is found in the chloroplast thylakoid membrane. It carries out the reaction ATP + H2O + 4 H(+)(in) = ADP + phosphate + 5 H(+)(out). Produces ATP from ADP in the presence of a proton gradient across the membrane. The catalytic sites are hosted primarily by the beta subunits. The sequence is that of ATP synthase subunit beta, chloroplastic from Capsella bursa-pastoris (Shepherd's purse).